Here is a 592-residue protein sequence, read N- to C-terminus: Transducer of Cdc42-dependent actin assembly protein 1 homolog (592 aa).

Residues 3 to 267 (DSCSWDQLWD…DIGLIDPSRD (265 aa)) form the F-BAR domain. 2 disordered regions span residues 343-366 (FGGG…QQRA) and 447-519 (SATS…DELY). In terms of domain architecture, REM-1 spans 359 to 436 (TLPPQQRARK…IQKFKILLDD (78 aa)). A coiled-coil region spans residues 363–441 (QQRARKIAGK…ILLDDVNAQL (79 aa)). Positions 447–457 (SATSVGGSDTP) are enriched in polar residues. The segment covering 459–474 (SIRSVSSASSGVTSRV) has biased composition (low complexity). Residues 495–510 (FSGSNGGSDTDPTING) are compositionally biased toward polar residues. The SH3 domain maps to 527 to 589 (PVLGEAIAQF…PSSYLKVTWF (63 aa)).

The protein belongs to the FNBP1 family. In terms of assembly, interacts (via SH3 domain) with wsp-1. Interacts with cdc-42 and (via SH3 domain) with wve-1. Expressed in the germline and specifically in the gonads.

The protein localises to the cell junction. The protein resides in the apical cell membrane. Its subcellular location is the basolateral cell membrane. It localises to the cytoplasmic vesicle. It is found in the cytoplasm. The protein localises to the perinuclear region. The protein resides in the recycling endosome. Plays a role in protein trafficking, actin organization and embryonic morphogenesis. Potentially acts as a cdc-42 effector. May play a role in hypodermal P-cell nuclear positioning. Together with toca-2, is required for protein trafficking regulating yolk protein clathrin-mediated endocytosis by oocytes during oogenesis and retrograde recycling and the sorting of recycling endosome cargo proteins such as mig-14. Also, together with toca-2, controls the distribution of actin at cell junctions. This is Transducer of Cdc42-dependent actin assembly protein 1 homolog from Caenorhabditis elegans.